Here is a 142-residue protein sequence, read N- to C-terminus: gSG7 salivary protein (142 aa).

An N-terminal signal peptide occupies residues M1–A26. 2 disulfide bridges follow: C84–C139 and C107–C117.

Associates with activated host C3-convertase complex C3bBb (C3-CFB). Interacts with host properdin (CFP), a regulator of the alternate pathway of complement. As to expression, female salivary gland (at protein level).

The protein resides in the secreted. In terms of biological role, salivary protein that potently inhibits the alternative pathway of complement system activation in the host while having no inhibitory effect on the classical or lectin pathways. Binds and stabilizes activated host C3-convertase complex C3bBb (C3-CFB) and inhibits its convertase activity. Enhances accumulation of C3bBb on immobilized properdin. This chain is gSG7 salivary protein, found in Anopheles albimanus (New world malaria mosquito).